Here is a 764-residue protein sequence, read N- to C-terminus: 5-methyltetrahydropteroyltriglutamate--homocysteine methyltransferase (764 aa).

5-methyltetrahydropteroyltri-L-glutamate is bound by residues 17–20 (RELK) and Lys-117. Residues 437–439 (IGS) and Glu-490 each bind L-homocysteine. L-methionine contacts are provided by residues 437–439 (IGS) and Glu-490. 5-methyltetrahydropteroyltri-L-glutamate contacts are provided by residues 521-522 (RC) and Trp-567. L-homocysteine is bound at residue Asp-605. Asp-605 provides a ligand contact to L-methionine. A 5-methyltetrahydropteroyltri-L-glutamate-binding site is contributed by Glu-611. Zn(2+) is bound by residues His-647, Cys-649, and Glu-671. The active-site Proton donor is His-701. Cys-733 contacts Zn(2+).

It belongs to the vitamin-B12 independent methionine synthase family. The cofactor is Zn(2+).

It catalyses the reaction 5-methyltetrahydropteroyltri-L-glutamate + L-homocysteine = tetrahydropteroyltri-L-glutamate + L-methionine. It functions in the pathway amino-acid biosynthesis; L-methionine biosynthesis via de novo pathway; L-methionine from L-homocysteine (MetE route): step 1/1. Its function is as follows. Catalyzes the transfer of a methyl group from 5-methyltetrahydrofolate to homocysteine resulting in methionine formation. The polypeptide is 5-methyltetrahydropteroyltriglutamate--homocysteine methyltransferase (Blochmanniella pennsylvanica (strain BPEN)).